Here is a 540-residue protein sequence, read N- to C-terminus: Cytochrome P450 monooxygenase prx8 (540 aa).

The helical transmembrane segment at 50 to 68 (ALGAAIALFACACAYALVA) threads the bilayer. Asparagine 460 carries N-linked (GlcNAc...) asparagine glycosylation. Cysteine 483 contacts heme.

The protein belongs to the cytochrome P450 family. Requires heme as cofactor.

It is found in the membrane. It participates in sesquiterpene biosynthesis. Its function is as follows. Cytochrome P450 monooxygenase; part of the gene cluster that mediates the biosynthesis of PR-toxin, a bicyclic sesquiterpene belonging to the eremophilane class and acting as a mycotoxin. The first step of the pathway is catalyzed by the aristolochene synthase which performs the cyclization of trans,trans-farnesyl diphosphate (FPP) to the bicyclic sesquiterpene aristolochene. Following the formation of aristolochene, the non-oxygenated aristolochene is converted to the trioxygenated intermediate eremofortin B, via 7-epi-neopetasone. This conversion appears to involve three enzymes, a hydroxysterol oxidase-like enzyme, the quinone-oxidase prx3 that forms the quinone-type-structure in the bicyclic nucleus of aristolochene with the C8-oxo group and the C-3 hydroxyl group, and the P450 monooxygenase prx9 that introduces the epoxide at the double bond between carbons 1 and 2. No monoxy or dioxy-intermediates have been reported to be released to the broth, so these three early oxidative reactions may be coupled together. Eremofortin B is further oxidized by another P450 monooxygenase, that introduces a second epoxide between carbons 7 and 11 prior to acetylation to eremofortin A by the acetyltransferase prx11. The second epoxidation may be performed by a second P450 monooxygenase. After the acetylation step, eremofortin A is converted to eremofortin C and then to PR-toxin. First the conversion of eremofortin A to eremofortin C proceeds by oxidation of the side chain of the molecule at C-12 and is catalyzed by the short-chain oxidoreductase prx1. The cytochrome P450 monooxygenase prx8 also plays a role in this step. The primary alcohol formed at C-12 is finally oxidized by the short-chain alcohol dehydrogenase prx4 that forms PR-toxin. The sequence is that of Cytochrome P450 monooxygenase prx8 from Penicillium rubens (strain ATCC 28089 / DSM 1075 / NRRL 1951 / Wisconsin 54-1255) (Penicillium chrysogenum).